We begin with the raw amino-acid sequence, 777 residues long: Aconitate hydratase, mitochondrial (777 aa).

Substrate is bound by residues Q96 and 189-191; that span reads DSH. Residues C383, C446, and C449 each contribute to the [4Fe-4S] cluster site. Substrate is bound by residues R472, R477, R605, and 668–669; that span reads SR.

It belongs to the aconitase/IPM isomerase family. As to quaternary structure, monomer. Requires [4Fe-4S] cluster as cofactor.

It is found in the mitochondrion. It carries out the reaction citrate = D-threo-isocitrate. It functions in the pathway carbohydrate metabolism; tricarboxylic acid cycle; isocitrate from oxaloacetate: step 2/2. Its function is as follows. Catalyzes the isomerization of citrate to isocitrate via cis-aconitate, a step in the citric acid cycle. The chain is Aconitate hydratase, mitochondrial (ACO1) from Candida albicans (strain SC5314 / ATCC MYA-2876) (Yeast).